Here is a 494-residue protein sequence, read N- to C-terminus: Sucrose-6-phosphate hydrolase (494 aa).

Residues 45–48 (LLND), Gln64, 107–108 (YS), 168–169 (RD), and Glu223 contribute to the substrate site. Residue Asp48 is part of the active site.

It belongs to the glycosyl hydrolase 32 family.

It catalyses the reaction Hydrolysis of terminal non-reducing beta-D-fructofuranoside residues in beta-D-fructofuranosides.. It participates in glycan biosynthesis; sucrose metabolism. In Staphylococcus xylosus, this protein is Sucrose-6-phosphate hydrolase (scrB).